Here is a 341-residue protein sequence, read N- to C-terminus: tRNA dimethylallyltransferase (341 aa).

15–22 contacts ATP; it reads GPTAAGKT. 17–22 serves as a coordination point for substrate; the sequence is TAAGKT. Interaction with substrate tRNA regions lie at residues 44 to 47, 168 to 172, 253 to 258, and 302 to 309; these read DSAL, QRIQR, RCVGYR, and KRQITWLR.

The protein belongs to the IPP transferase family. In terms of assembly, monomer. Requires Mg(2+) as cofactor.

It catalyses the reaction adenosine(37) in tRNA + dimethylallyl diphosphate = N(6)-dimethylallyladenosine(37) in tRNA + diphosphate. Its function is as follows. Catalyzes the transfer of a dimethylallyl group onto the adenine at position 37 in tRNAs that read codons beginning with uridine, leading to the formation of N6-(dimethylallyl)adenosine (i(6)A). This chain is tRNA dimethylallyltransferase, found in Verminephrobacter eiseniae (strain EF01-2).